The chain runs to 63 residues: DNA-directed RNA polymerase 7 kDa subunit (63 aa).

Belongs to the poxviridae DNA-directed RNA polymerase 7 kDa subunit family. As to quaternary structure, the DNA-dependent RNA polymerase used for intermediate and late genes expression consists of eight subunits 147 kDa, 133 kDa, 35 kDa, 30 kDa, 22 kDa, 19 kDa, 18 kDa and 7 kDa totalling more than 500 kDa in mass. The same holoenzyme, with the addition of the transcription-specificity factor RAP94, is used for early gene expression.

It is found in the virion. It catalyses the reaction RNA(n) + a ribonucleoside 5'-triphosphate = RNA(n+1) + diphosphate. Functionally, part of the DNA-dependent RNA polymerase which catalyzes the transcription of viral DNA into RNA using the four ribonucleoside triphosphates as substrates. Responsible for the transcription of early, intermediate and late genes. DNA-dependent RNA polymerase associates with the early transcription factor (ETF) thereby allowing the early genes transcription. Late transcription, and probably also intermediate transcription, require newly synthesized RNA polymerase. This chain is DNA-directed RNA polymerase 7 kDa subunit (RPO7), found in Homo sapiens (Human).